The sequence spans 489 residues: MTFRHCVAVDLGASSGRVMLARYDSKHRTLTLREIHRFVNCLQKTDGFDTWDIDSLEKDIRLGLKKVCNEGILIDSIGIDTWGVDYVLLDKQGQRVGLPVSYRDNRTTGIMPQALVQIGKSEIYRRSGIQFLPFNTIYQLRALTKQQPELTAQVAHALLMPDYFSYRLTGEMNWEYTNATTTQLVNINTDDWDDTLLAWTGAKKSWFGRPSHPGNVIGDWICPQGNRIPVVAVASHDTASAVIASPLANKHSAYLSSGTWSLMGFESKMPYTTDEALAANITNEGGAEGRYRVLKNIMGLWLLQRVLKERRITDLPALIAQTEALPACRFLINPNDDRFINPDDMRAEIQAVCRETDQPVPVSDAELARCIFDSLALLYADILHELANLRGEKFTQLHIVGGGCQNSLLNQLCADACGIRVIAGPVEASTLGNIGIQLMTLDELNNVDDFRQVVSANYDLTTYIPNPDSEIARHVAQFQPKRQTKELCA.

13–17 (ASSGR) lines the ATP pocket. An intrachain disulfide couples Cys-68 to Cys-222. Substrate is bound by residues Gly-83 and 236-238 (HDT). Asp-237 acts as the Proton acceptor in catalysis. Thr-259 serves as a coordination point for ATP. Asn-296 serves as a coordination point for substrate. Residue Gln-304 participates in ATP binding. A disulfide bridge links Cys-353 with Cys-370. Gly-402 is a binding site for ATP. Residues Cys-413 and Cys-417 are joined by a disulfide bond.

It belongs to the rhamnulokinase family. The cofactor is Mg(2+).

The enzyme catalyses L-rhamnulose + ATP = L-rhamnulose 1-phosphate + ADP + H(+). Its pathway is carbohydrate degradation; L-rhamnose degradation; glycerone phosphate from L-rhamnose: step 2/3. In terms of biological role, involved in the catabolism of L-rhamnose (6-deoxy-L-mannose). Catalyzes the transfer of the gamma-phosphate group from ATP to the 1-hydroxyl group of L-rhamnulose to yield L-rhamnulose 1-phosphate. In Salmonella choleraesuis (strain SC-B67), this protein is Rhamnulokinase.